The chain runs to 197 residues: MEEPPVREEEDGEEDEGALAKSPLQLTTEDVYDISYVVGRELMALGSDPRVTRLQFKIVRVMEMLEALVNEGSLAVEELRMERDNLKQEVEGLRRAGVSGSEVNLGPDKMVVDLTDPNRPRFTLQELRDVLQERNKLKSQLLLVQEELQCYRSGLLPPRETPGGRREKDAMVTMGNGEKEERTIMKKLFSFRSGKHT.

Positions 14 to 96 (EDEGALAKSP…KQEVEGLRRA (83 aa)) constitute an RH1 domain. Positions 65 to 153 (LEALVNEGSL…VQEELQCYRS (89 aa)) form a coiled coil. One can recognise an RH2 domain in the interval 119 to 184 (RPRFTLQELR…GNGEKEERTI (66 aa)).

As to quaternary structure, homodimer. Interacts (via N-terminus) with MYO5A, the interaction is required for its role in dendrite formation. Interacts with RAC1. Interacts with RAB8A; interaction is dependent on the phosphorylation of RAB8A on 'Thr-72'. Interacts with RAB10 and RAB12; interaction is dependent on the phosphorylation of 'Thr-73' on RAB10 and 'Ser-105' on RAB12.

The protein resides in the cytoplasm. It is found in the cytosol. The protein localises to the cytoskeleton. Its subcellular location is the microtubule organizing center. It localises to the centrosome. The protein resides in the cell projection. It is found in the cilium. Functionally, involved in cell shape and neuronal morphogenesis, positively regulating the establishment and maintenance of dendritic spines. Plays a role in cellular protein transport, including protein transport away from primary cilia. May function via activation of RAC1 and PAK1. The polypeptide is RILP-like protein 2 (Rilpl2) (Rattus norvegicus (Rat)).